Reading from the N-terminus, the 639-residue chain is MGKIIGIDLGTTNSCVAVLDGGKARVLENAEGDRTTPSIIAYTDDETIVGSPAKRQAVTNPTNTFFAIKRLIGRRFKDDEVQRDVNIMPFKIIAADNGDAWVESRGNKMAPPQVSAEILKKMKKTAEDFLGEEVTEAVITVPAYFNDSQRQATKDAGRIAGLDVKRIINEPTAAALAYGIDKKQGDNIVAVYDLGGGTFDISIIEIDSNDGDQTFEVLATNGDTHLGGEDFDNRLINYLADEFKKEQGLDLRKDPLAMQRLKEAAEKAKIELSSTNHTEVNLPYITADATGPKHLVIKITRAKLESLVEDLIIRTLEPLKVALADADLSVTDINEVILVGGQTRMPKVQEAVTNFFGKEPRKDVNPDEAVAVGAAIQAGVLSGDVKDVLLLDVTPLSLGIETMGSVMTKLIEKNTTIPTKAQQVFSTADDNQSAVTIHVLQGERKQASANKSLGQFNLDGIEPAQRGQPQIEVMFDIDADGILHVSATDKKTGKKQNITIKASSGLSEEEVAQMVRDAEAHADEDKKFEELVQSRNQADGLVHATKKQVEEAGDALPSEDKEKIQAAMDAVDTAIKGNDKEAIEKATQELIEASAKLMEIAQAKSQAQGGDNADAGKQANATADDVVDAEFEEVKDDKK.

Thr198 bears the Phosphothreonine; by autocatalysis mark. Positions 602 to 639 (QAKSQAQGGDNADAGKQANATADDVVDAEFEEVKDDKK) are disordered. Over residues 625 to 639 (DVVDAEFEEVKDDKK) the composition is skewed to acidic residues.

It belongs to the heat shock protein 70 family.

Functionally, acts as a chaperone. The polypeptide is Chaperone protein DnaK (Shewanella baltica (strain OS195)).